Reading from the N-terminus, the 86-residue chain is Toxin Cn1 (86 aa).

Residues Met-1–Ala-19 form the signal peptide. The LCN-type CS-alpha/beta domain occupies Lys-20–Ser-84. 4 disulfides stabilise this stretch: Cys-30-Cys-83, Cys-34-Cys-59, Cys-43-Cys-64, and Cys-47-Cys-66. Ser-84 carries the serine amide modification.

It belongs to the long (4 C-C) scorpion toxin superfamily. Sodium channel inhibitor family. Beta subfamily. In terms of tissue distribution, expressed by the venom gland.

It is found in the secreted. Functionally, beta toxins bind voltage-independently at site-4 of sodium channels (Nav) and shift the voltage of activation toward more negative potentials thereby affecting sodium channel activation and promoting spontaneous and repetitive firing. In Centruroides noxius (Mexican scorpion), this protein is Toxin Cn1.